Here is a 164-residue protein sequence, read N- to C-terminus: Putative 4-hydroxy-4-methyl-2-oxoglutarate aldolase (164 aa).

Substrate contacts are provided by residues 80–83 (GGNL) and Arg-102. Asp-103 serves as a coordination point for a divalent metal cation.

The protein belongs to the class II aldolase/RraA-like family. Homotrimer. Requires a divalent metal cation as cofactor.

It catalyses the reaction 4-hydroxy-4-methyl-2-oxoglutarate = 2 pyruvate. The catalysed reaction is oxaloacetate + H(+) = pyruvate + CO2. Catalyzes the aldol cleavage of 4-hydroxy-4-methyl-2-oxoglutarate (HMG) into 2 molecules of pyruvate. Also contains a secondary oxaloacetate (OAA) decarboxylase activity due to the common pyruvate enolate transition state formed following C-C bond cleavage in the retro-aldol and decarboxylation reactions. The polypeptide is Putative 4-hydroxy-4-methyl-2-oxoglutarate aldolase (Paraburkholderia phymatum (strain DSM 17167 / CIP 108236 / LMG 21445 / STM815) (Burkholderia phymatum)).